A 711-amino-acid polypeptide reads, in one-letter code: Hydroperoxide isomerase ALOXE3 (711 aa).

Residues 2-119 (AVYRLCVTTG…TVELRPGTAR (118 aa)) form the PLAT domain. One can recognise a Lipoxygenase domain in the interval 120-711 (TICQDSLPLL…PPLIENSVSI (592 aa)). The Fe cation site is built by histidine 408, histidine 413, histidine 588, asparagine 592, and isoleucine 711.

This sequence belongs to the lipoxygenase family. The cofactor is Fe cation. Skin specific.

It localises to the cytoplasm. The catalysed reaction is a hydroperoxyeicosatetraenoate = a hydroxy-epoxy-eicosatetraenoate. The enzyme catalyses (8S)-hydroperoxy-(5Z,9E,11Z,14Z)-eicosatetraenoate = (10R)-hydroxy-(8S,9S)-epoxy-(5Z,11Z,14Z)-eicosatrienoate. It carries out the reaction (12R)-hydroperoxy-(5Z,8Z,10E,14Z)-eicosatetraenoate = (8R)-hydroxy-(11R,12R)-epoxy-(5Z,9E,14Z)-eicosatrienoate. It catalyses the reaction (12S)-hydroperoxy-(5Z,8Z,10E,14Z)-eicosatetraenoate = (8R)-hydroxy-(11S,12S)-epoxy-(5Z,9E,14Z)-eicosatrienoate. The catalysed reaction is (12S)-hydroperoxy-(5Z,8Z,10E,14Z)-eicosatetraenoate = (10R)-hydroxy-(11S,12S)-epoxy-(5Z,8Z,14Z)-eicosatrienoate. The enzyme catalyses (15S)-hydroperoxy-(5Z,8Z,11Z,13E)-eicosatetraenoate = (13R)-hydroxy-(14S,15S)-epoxy-(5Z,8Z,11Z)-eicosatrienoate. It carries out the reaction (13S)-hydroperoxy-(9Z,11E)-octadecadienoate = 11-hydroxy-(12S,13S)-epoxy-(9Z)-octadecenoate. It catalyses the reaction (5S)-hydroperoxy-(6E,8Z,11Z,14Z)-eicosatetraenoate = 7R-hydroxy-5S,6S-epoxy-(8Z,11Z,14Z)-eicosatrienoate. The catalysed reaction is N-[omega-(9R)-hydroperoxy-(10E,12Z)-octadecadienoyloxy]acyl-beta-D-glucosyl-(1&lt;-&gt;1)-octadecasphing-4E-enine = a N-[omega-(9R,10R)-epoxy-(13R)-hydroxy-(11E)-octadecenoyloxy]acyl-beta-D-glucosyl-(1&lt;-&gt;1)-sphing-4E-enine. The enzyme catalyses a N-[omega-(9R)-hydroperoxy-(10E,12Z)-octadecadienoyloxy]-acylsphin-4E-enine = a N-[omega-(9R,10R)-epoxy-(13R)-hydroxy-(11E)-octadecenoyloxy]-acylsphing-4E-enine. It carries out the reaction a hydroperoxyeicosatetraenoate = an oxoeicosatetraenoate + H2O. It catalyses the reaction (8R)-hydroperoxy-(5Z,9E,11Z,14Z)-eicosatetraenoate = 8-oxo-(5Z,9E,11Z,14Z)-eicosatetraenoate + H2O. The catalysed reaction is (8S)-hydroperoxy-(5Z,9E,11Z,14Z)-eicosatetraenoate = 8-oxo-(5Z,9E,11Z,14Z)-eicosatetraenoate + H2O. The enzyme catalyses (12R)-hydroperoxy-(5Z,8Z,10E,14Z)-eicosatetraenoate = 12-oxo-(5Z,8Z,10E,14Z)-eicosatetraenoate + H2O. It carries out the reaction (12S)-hydroperoxy-(5Z,8Z,10E,14Z)-eicosatetraenoate = 12-oxo-(5Z,8Z,10E,14Z)-eicosatetraenoate + H2O. It catalyses the reaction (15S)-hydroperoxy-(5Z,8Z,11Z,13E)-eicosatetraenoate = 15-oxo-(5Z,8Z,11Z,13E)-eicosatetraenoate + H2O. The catalysed reaction is (13S)-hydroperoxy-(9Z,11E)-octadecadienoate = 13-oxo-(9Z,11E)-octadecadienoate + H2O. The protein operates within lipid metabolism; hydroperoxy eicosatetraenoic acid biosynthesis. It participates in lipid metabolism; sphingolipid metabolism. Non-heme iron-containing lipoxygenase which is atypical in that it displays a prominent hydroperoxide isomerase activity and a reduced lipoxygenases activity. The hydroperoxide isomerase activity catalyzes the isomerization of hydroperoxides, derived from arachidonic and linoleic acid by ALOX12B, into hepoxilin-type epoxyalcohols and ketones. In presence of oxygen, oxygenates polyunsaturated fatty acids, including arachidonic acid, to produce fatty acid hydroperoxides. In the skin, acts downstream of ALOX12B on the linoleate moiety of esterified omega-hydroxyacyl-sphingosine (EOS) ceramides to produce an epoxy-ketone derivative, a crucial step in the conjugation of omega-hydroxyceramide to membrane proteins. Therefore plays a crucial role in the synthesis of corneocytes lipid envelope and the establishment of the skin barrier to water loss. In parallel, it may have a signaling function in barrier formation through the production of hepoxilins metabolites. Also plays a role in adipocyte differentiation through hepoxilin A3 and hepoxilin B3 production which in turn activate PPARG. Through the production of hepoxilins in the spinal cord, it may regulate inflammatory tactile allodynia. In Mus musculus (Mouse), this protein is Hydroperoxide isomerase ALOXE3.